Reading from the N-terminus, the 349-residue chain is Phosphoribosylformylglycinamidine cyclo-ligase (349 aa).

This sequence belongs to the AIR synthase family.

It localises to the cytoplasm. It carries out the reaction 2-formamido-N(1)-(5-O-phospho-beta-D-ribosyl)acetamidine + ATP = 5-amino-1-(5-phospho-beta-D-ribosyl)imidazole + ADP + phosphate + H(+). It participates in purine metabolism; IMP biosynthesis via de novo pathway; 5-amino-1-(5-phospho-D-ribosyl)imidazole from N(2)-formyl-N(1)-(5-phospho-D-ribosyl)glycinamide: step 2/2. The protein is Phosphoribosylformylglycinamidine cyclo-ligase of Jannaschia sp. (strain CCS1).